Consider the following 189-residue polypeptide: GTP cyclohydrolase 1 (189 aa).

Zn(2+) is bound by residues Cys-78, His-81, and Cys-150.

This sequence belongs to the GTP cyclohydrolase I family. Toroid-shaped homodecamer, composed of two pentamers of five dimers.

The catalysed reaction is GTP + H2O = 7,8-dihydroneopterin 3'-triphosphate + formate + H(+). It functions in the pathway cofactor biosynthesis; 7,8-dihydroneopterin triphosphate biosynthesis; 7,8-dihydroneopterin triphosphate from GTP: step 1/1. In Listeria welshimeri serovar 6b (strain ATCC 35897 / DSM 20650 / CCUG 15529 / CIP 8149 / NCTC 11857 / SLCC 5334 / V8), this protein is GTP cyclohydrolase 1.